Here is a 524-residue protein sequence, read N- to C-terminus: GMP synthase [glutamine-hydrolyzing] (524 aa).

The Glutamine amidotransferase type-1 domain occupies arginine 9–asparagine 207. Residue cysteine 86 is the Nucleophile of the active site. Residues histidine 181 and glutamate 183 contribute to the active site. The region spanning tryptophan 208 to arginine 399 is the GMPS ATP-PPase domain. Serine 235–alanine 241 contacts ATP.

As to quaternary structure, homodimer.

It catalyses the reaction XMP + L-glutamine + ATP + H2O = GMP + L-glutamate + AMP + diphosphate + 2 H(+). Its pathway is purine metabolism; GMP biosynthesis; GMP from XMP (L-Gln route): step 1/1. Functionally, catalyzes the synthesis of GMP from XMP. The polypeptide is GMP synthase [glutamine-hydrolyzing] (Coxiella burnetii (strain CbuK_Q154) (Coxiella burnetii (strain Q154))).